The following is a 412-amino-acid chain: MNLPTLWTWILPPIAGAIIGYFTNDVAIKMLFRPYKAIYIGKRPLPFTPGLIPRNQDRLAVRVSDTIMGSLLTPEELQKLAKRLLDTERVQGAILWLLQLALKQIKGDRQAKTAEILAAILHDLFGESLARLLKVLARRQDFLEKQINQIFDRLVLEFSLSEQQARQFSDWLLETVLPADVIRLALIDFLTDRNIQVIDEGFREKTSGTYWVVANLFGLRNALARLRTFCLDEKDLANTRIKELLLSLEMRNRLKNWLQSISLQNLPISTVRQLRKTTRDTVRIYIQESGEQFLQDFGQTIDWDQIANLIINRLQSSVSMTTSLGVISQELALILERYLEEDLEKLVAQIIPILNIDQVIRDRVNATSPADLENAIQGIVKQELQGIVNLGGILGLLVGLMQTIILIAQNPG.

2 helical membrane-spanning segments follow: residues 3-23 and 387-407; these read LPTL…GYFT and IVNL…IILI.

It belongs to the UPF0754 family.

It is found in the cell inner membrane. In Microcystis aeruginosa (strain NIES-843 / IAM M-2473), this protein is UPF0754 membrane protein MAE_37850.